The primary structure comprises 683 residues: Zinc finger protein 418 (683 aa).

Residues 48–123 (VTIEDVTVYF…TPKQGQLRQK (76 aa)) enclose the KRAB domain. Residues 102-120 (QSLSQTEAPQVRTPKQGQL) are compositionally biased toward polar residues. 2 disordered regions span residues 102-124 (QSLS…RQKP) and 209-247 (DIPN…QHRL). Basic and acidic residues predominate over residues 225-239 (FHRDKNNSESDEYKK). C2H2-type zinc fingers lie at residues 287 to 309 (YECH…QRRH), 315 to 337 (YKCG…CRVH), 343 to 365 (FECL…QRTH), 371 to 393 (YECS…QRTH), 399 to 421 (YECG…QRVH), 427 to 449 (YHCE…SKIH), 455 to 477 (YECG…QRTH), 483 to 505 (YECR…RRIH), 511 to 533 (YECE…QRVH), 539 to 561 (YKCE…QRTH), 567 to 589 (YECA…QKIH), 595 to 617 (YHCD…QRVH), 623 to 645 (YTCG…RRIH), and 651 to 673 (YECD…QLLH).

The protein belongs to the krueppel C2H2-type zinc-finger protein family.

The protein resides in the nucleus. Its function is as follows. Transcriptional repressor. May play a role as regulator of the ubiquitin-proteasome system and autophagy-lysosomal pathway. The chain is Zinc finger protein 418 from Rattus norvegicus (Rat).